A 539-amino-acid chain; its full sequence is Glucans biosynthesis protein D (539 aa).

A signal peptide (tat-type signal) is located at residues 1–29 (MNRRNLLKASMALAAYGSVSASGLYAARA).

This sequence belongs to the OpgD/OpgG family. In terms of processing, predicted to be exported by the Tat system. The position of the signal peptide cleavage has not been experimentally proven.

It localises to the periplasm. It participates in glycan metabolism; osmoregulated periplasmic glucan (OPG) biosynthesis. Its function is as follows. Probably involved in the control of the structural glucose backbone of osmoregulated periplasmic glucans (OPGs). The protein is Glucans biosynthesis protein D of Pseudomonas savastanoi pv. phaseolicola (strain 1448A / Race 6) (Pseudomonas syringae pv. phaseolicola (strain 1448A / Race 6)).